A 69-amino-acid polypeptide reads, in one-letter code: Guanine nucleotide-binding protein G(I)/G(S)/G(O) subunit gamma-T2 (69 aa).

Residues 47–69 are disordered; the sequence is DPLLKGIPEDKNPFKEKGGCMIS. Residues 53 to 69 are compositionally biased toward basic and acidic residues; it reads IPEDKNPFKEKGGCMIS. The residue at position 66 (C66) is a Cysteine methyl ester. A lipid anchor (S-farnesyl cysteine) is attached at C66. Residues 67-69 constitute a propeptide, removed in mature form; it reads MIS.

Belongs to the G protein gamma family. In terms of assembly, g proteins are composed of 3 units, alpha, beta and gamma.

Its subcellular location is the cell membrane. In terms of biological role, guanine nucleotide-binding proteins (G proteins) are involved as a modulator or transducer in various transmembrane signaling systems. The beta and gamma chains are required for the GTPase activity, for replacement of GDP by GTP, and for G protein-effector interaction. In Canis lupus familiaris (Dog), this protein is Guanine nucleotide-binding protein G(I)/G(S)/G(O) subunit gamma-T2 (GNGT2).